We begin with the raw amino-acid sequence, 471 residues long: Arginine biosynthesis bifunctional protein ArgJ, mitochondrial (471 aa).

Substrate-binding residues include T190, K216, T239, E327, N466, and S471. T239 serves as the catalytic Nucleophile.

The protein belongs to the ArgJ family. In terms of assembly, heterodimer of an alpha and a beta chain. In terms of processing, the alpha and beta chains are autoproteolytically processed from a single precursor protein within the mitochondrion.

It localises to the mitochondrion matrix. It carries out the reaction N(2)-acetyl-L-ornithine + L-glutamate = N-acetyl-L-glutamate + L-ornithine. It catalyses the reaction L-glutamate + acetyl-CoA = N-acetyl-L-glutamate + CoA + H(+). The protein operates within amino-acid biosynthesis; L-arginine biosynthesis; L-ornithine and N-acetyl-L-glutamate from L-glutamate and N(2)-acetyl-L-ornithine (cyclic): step 1/1. It participates in amino-acid biosynthesis; L-arginine biosynthesis; N(2)-acetyl-L-ornithine from L-glutamate: step 1/4. Catalyzes two activities which are involved in the cyclic version of arginine biosynthesis: the synthesis of acetylglutamate from glutamate and acetyl-CoA, and of ornithine by transacetylation between acetylornithine and glutamate. The protein is Arginine biosynthesis bifunctional protein ArgJ, mitochondrial of Coprinopsis cinerea (strain Okayama-7 / 130 / ATCC MYA-4618 / FGSC 9003) (Inky cap fungus).